A 300-amino-acid polypeptide reads, in one-letter code: Ribosomal protein L11 methyltransferase (300 aa).

Positions 152, 173, 195, and 234 each coordinate S-adenosyl-L-methionine.

This sequence belongs to the methyltransferase superfamily. PrmA family.

It localises to the cytoplasm. It catalyses the reaction L-lysyl-[protein] + 3 S-adenosyl-L-methionine = N(6),N(6),N(6)-trimethyl-L-lysyl-[protein] + 3 S-adenosyl-L-homocysteine + 3 H(+). In terms of biological role, methylates ribosomal protein L11. In Burkholderia orbicola (strain MC0-3), this protein is Ribosomal protein L11 methyltransferase.